Reading from the N-terminus, the 144-residue chain is HTH-type transcriptional repressor NsrR (144 aa).

Positions 2–129 (QLTSFTDYGL…DKHTLLSLID (128 aa)) constitute an HTH rrf2-type domain. The H-T-H motif DNA-binding region spans 28–51 (ISKVTEVYGVSRNHMVKIINKLGQ). Positions 91, 96, and 102 each coordinate [2Fe-2S] cluster.

Requires [2Fe-2S] cluster as cofactor.

Its function is as follows. Nitric oxide-sensitive repressor of genes involved in protecting the cell against nitrosative stress. May require iron for activity. In Photobacterium profundum (strain SS9), this protein is HTH-type transcriptional repressor NsrR.